The following is a 91-amino-acid chain: Small ribosomal subunit protein uS19 (91 aa).

It belongs to the universal ribosomal protein uS19 family.

Its function is as follows. Protein S19 forms a complex with S13 that binds strongly to the 16S ribosomal RNA. The chain is Small ribosomal subunit protein uS19 (rpsS) from Mycoplasmopsis pulmonis (strain UAB CTIP) (Mycoplasma pulmonis).